The sequence spans 616 residues: Dihydroxy-acid dehydratase (616 aa).

Aspartate 81 contributes to the Mg(2+) binding site. Residue cysteine 122 coordinates [2Fe-2S] cluster. Mg(2+) is bound by residues aspartate 123 and lysine 124. Lysine 124 carries the post-translational modification N6-carboxylysine. Position 195 (cysteine 195) interacts with [2Fe-2S] cluster. Glutamate 491 serves as a coordination point for Mg(2+). Serine 517 serves as the catalytic Proton acceptor.

The protein belongs to the IlvD/Edd family. In terms of assembly, homodimer. Requires [2Fe-2S] cluster as cofactor. Mg(2+) serves as cofactor.

The enzyme catalyses (2R)-2,3-dihydroxy-3-methylbutanoate = 3-methyl-2-oxobutanoate + H2O. It catalyses the reaction (2R,3R)-2,3-dihydroxy-3-methylpentanoate = (S)-3-methyl-2-oxopentanoate + H2O. The protein operates within amino-acid biosynthesis; L-isoleucine biosynthesis; L-isoleucine from 2-oxobutanoate: step 3/4. It participates in amino-acid biosynthesis; L-valine biosynthesis; L-valine from pyruvate: step 3/4. Functions in the biosynthesis of branched-chain amino acids. Catalyzes the dehydration of (2R,3R)-2,3-dihydroxy-3-methylpentanoate (2,3-dihydroxy-3-methylvalerate) into 2-oxo-3-methylpentanoate (2-oxo-3-methylvalerate) and of (2R)-2,3-dihydroxy-3-methylbutanoate (2,3-dihydroxyisovalerate) into 2-oxo-3-methylbutanoate (2-oxoisovalerate), the penultimate precursor to L-isoleucine and L-valine, respectively. The protein is Dihydroxy-acid dehydratase of Escherichia coli O17:K52:H18 (strain UMN026 / ExPEC).